We begin with the raw amino-acid sequence, 187 residues long: MRPTWKALSHPAWPEEKNKQILVLGLDGAGKTSVLHSLASNRVQHSVAPTQGFHAVCINTEDSQMEFLEIGGSKPFRSYWEMYLSKGLLLIFVVDSADHSRLPEAKKYLHQLIAANPVLPLVVFANKQDLEAAYHITDIHEALALSEVGNDRKMFLFGTYLTKNGSEIPSTMQDAKDLIAQLAADVQ.

GTP is bound by residues Gly25 to Thr32, Glu69 to Ser73, and Asn126 to Asp129.

This sequence belongs to the small GTPase superfamily. Arf family.

The polypeptide is ADP-ribosylation factor-like protein 9 (ARL9) (Homo sapiens (Human)).